The chain runs to 31 residues: Photosystem II reaction center protein T (31 aa).

Residues 3-23 (ALVYTFLLIGTLGVIFFAIFF) traverse the membrane as a helical segment.

Belongs to the PsbT family. In terms of assembly, PSII is composed of 1 copy each of membrane proteins PsbA, PsbB, PsbC, PsbD, PsbE, PsbF, PsbH, PsbI, PsbJ, PsbK, PsbL, PsbM, PsbT, PsbY, PsbZ, Psb30/Ycf12, at least 3 peripheral proteins of the oxygen-evolving complex and a large number of cofactors. It forms dimeric complexes.

The protein localises to the plastid. It is found in the chloroplast thylakoid membrane. Functionally, found at the monomer-monomer interface of the photosystem II (PS II) dimer, plays a role in assembly and dimerization of PSII. PSII is a light-driven water plastoquinone oxidoreductase, using light energy to abstract electrons from H(2)O, generating a proton gradient subsequently used for ATP formation. This chain is Photosystem II reaction center protein T, found in Euglena gracilis.